A 37-amino-acid polypeptide reads, in one-letter code: MKVQPSVKQICDKCKVIRRNGRVMVICENPRHKQRQG.

It belongs to the bacterial ribosomal protein bL36 family.

The chain is Large ribosomal subunit protein bL36A from Kocuria rhizophila (strain ATCC 9341 / DSM 348 / NBRC 103217 / DC2201).